A 319-amino-acid polypeptide reads, in one-letter code: UDP-N-acetylenolpyruvoylglucosamine reductase (319 aa).

The 164-residue stretch at 35-198 (VGGPAEAMFK…TGCVLAGRPD (164 aa)) folds into the FAD-binding PCMH-type domain. The active site involves R178. The active-site Proton donor is the S227. Residue E302 is part of the active site.

This sequence belongs to the MurB family. Requires FAD as cofactor.

It localises to the cytoplasm. It carries out the reaction UDP-N-acetyl-alpha-D-muramate + NADP(+) = UDP-N-acetyl-3-O-(1-carboxyvinyl)-alpha-D-glucosamine + NADPH + H(+). Its pathway is cell wall biogenesis; peptidoglycan biosynthesis. Functionally, cell wall formation. The protein is UDP-N-acetylenolpyruvoylglucosamine reductase of Rhodospirillum rubrum (strain ATCC 11170 / ATH 1.1.1 / DSM 467 / LMG 4362 / NCIMB 8255 / S1).